Here is a 401-residue protein sequence, read N- to C-terminus: Probable [pyruvate dehydrogenase (acetyl-transferring)] kinase, mitochondrial (401 aa).

The Histidine kinase domain occupies 131 to 360 (LIELRESDGV…DACIYLKAVP (230 aa)). ATP-binding positions include 247-254 (ELFKNAMR), D286, 305-306 (ST), and 321-326 (GYGYGL).

The protein belongs to the PDK/BCKDK protein kinase family.

It is found in the mitochondrion matrix. It catalyses the reaction L-seryl-[pyruvate dehydrogenase E1 alpha subunit] + ATP = O-phospho-L-seryl-[pyruvate dehydrogenase E1 alpha subunit] + ADP + H(+). Inhibits the mitochondrial pyruvate dehydrogenase complex by phosphorylation of the E1 alpha subunit, thus contributing to the regulation of glucose metabolism. Required for normal lifespan. The protein is Probable [pyruvate dehydrogenase (acetyl-transferring)] kinase, mitochondrial (pdhk-2) of Caenorhabditis elegans.